Reading from the N-terminus, the 66-residue chain is Toxin Tppa2 (66 aa).

An LCN-type CS-alpha/beta domain is found at 1-63 (KDGYLVGNDG…TWSRATNKCG (63 aa)). 4 disulfides stabilise this stretch: cysteine 11/cysteine 62, cysteine 15/cysteine 37, cysteine 23/cysteine 43, and cysteine 27/cysteine 45. Position 62 is a cysteine amide (cysteine 62).

It belongs to the long (4 C-C) scorpion toxin superfamily. Sodium channel inhibitor family. Beta subfamily. In terms of tissue distribution, expressed by the venom gland.

The protein localises to the secreted. Its function is as follows. Beta toxins bind voltage-independently at site-4 of sodium channels (Nav) and shift the voltage of activation toward more negative potentials thereby affecting sodium channel activation and promoting spontaneous and repetitive firing. This Tityus pachyurus (Colombian scorpion) protein is Toxin Tppa2.